A 291-amino-acid polypeptide reads, in one-letter code: Transcription factor TYE7 (291 aa).

The interval 89–109 (FPTDQFFSNPSSYSHSPEVSS) is disordered. The segment covering 96–109 (SNPSSYSHSPEVSS) has biased composition (low complexity). The residue at position 104 (Ser-104) is a Phosphoserine. Residues 180–265 (FQKQAHNKIE…EKAVDYILYL (86 aa)) enclose the bHLH domain. The DNA site is built by His-185, Glu-189, and Arg-193. The tract at residues 221-245 (DSVKKQDEDGAETAATTPLPSAAAT) is disordered. The segment covering 233–245 (TAATTPLPSAAAT) has biased composition (low complexity). Thr-237 carries the phosphothreonine modification.

Homodimer. Efficient DNA binding requires dimerization with another bHLH protein.

Its subcellular location is the nucleus. Its function is as follows. Transcriptional activator of glycolytic gene expression, such as enolase genes (ENO1 and ENO2), glyceraldehyde-3-phosphate dehydrogenase gene (TDH), phosphoglycerate kinase (PGK1), phosphoglycerate mutase (PGM1), pyruvate kinase (PYK1) and triosephosphate isomerase (TPI1) genes. Binds DNA on E-box motifs: 5'-CANNTG-3'. In response to adenylic nucleotide reduction, activates Ty1 mRNA transcription, possibly by controlling Ty1 antisense transcription. Acts as a cell cycle transcription factor. Its function may also be linked to sulfur metabolism and the cross-regulation between phosphate and sulfate metabolism. The sequence is that of Transcription factor TYE7 from Saccharomyces cerevisiae (strain ATCC 204508 / S288c) (Baker's yeast).